We begin with the raw amino-acid sequence, 622 residues long: Glutamyl-tRNA(Gln) amidotransferase subunit B, mitochondrial (622 aa).

Residues 1–54 (MSRIPTRELGRYLLQGQICQRGCVASSVSKSRAKQLGRHPLLPHDRHQPTQARH) constitute a mitochondrion transit peptide. Residues 30 to 67 (KSRAKQLGRHPLLPHDRHQPTQARHAHTVTTTATPTQL) are disordered. The segment covering 57 to 67 (TVTTTATPTQL) has biased composition (low complexity).

It belongs to the GatB/GatE family. GatB subfamily. In terms of assembly, subunit of the heterotrimeric GatCAB amidotransferase (AdT) complex, composed of A, B and C subunits.

It is found in the mitochondrion. It catalyses the reaction L-glutamyl-tRNA(Gln) + L-glutamine + ATP + H2O = L-glutaminyl-tRNA(Gln) + L-glutamate + ADP + phosphate + H(+). In terms of biological role, allows the formation of correctly charged Gln-tRNA(Gln) through the transamidation of misacylated Glu-tRNA(Gln) in the mitochondria. The reaction takes place in the presence of glutamine and ATP through an activated gamma-phospho-Glu-tRNA(Gln). The chain is Glutamyl-tRNA(Gln) amidotransferase subunit B, mitochondrial from Verticillium alfalfae (strain VaMs.102 / ATCC MYA-4576 / FGSC 10136) (Verticillium wilt of alfalfa).